Consider the following 351-residue polypeptide: Phosphatidylinositol transfer protein PDR16 (351 aa).

Positions 135-295 (LVAVENESGK…LYGGDLKFKY (161 aa)) constitute a CRAL-TRIO domain.

Homodimer. Apo-SFH3 forms a dimer through the hydrophobic interaction of gating helices. Binding of phosphatidylinositol leads to dissociation of the dimer into monomers in a reversible manner.

The protein localises to the lipid droplet. It is found in the microsome membrane. It localises to the endoplasmic reticulum membrane. It carries out the reaction a 1,2-diacyl-sn-glycero-3-phospho-(1D-myo-inositol)(in) = a 1,2-diacyl-sn-glycero-3-phospho-(1D-myo-inositol)(out). In terms of biological role, has phosphatidylinositol transfer activity. Involved in the regulation of the phospholipid composition of plasma- and endomembranes. Altering plasma membrane composition may provide a possible mechanism for multidrug resistance. Involved in the regulation of sterol biosynthesis. Contributes to efficient phospholipase D1 activation in the regulation of phospholipid turnover. Regulates the release of fatty acids from lipid droplets. The protein is Phosphatidylinositol transfer protein PDR16 (PDR16) of Saccharomyces cerevisiae (strain ATCC 204508 / S288c) (Baker's yeast).